A 370-amino-acid chain; its full sequence is MSFAPLQNDTFLRACRRQATDYTPLWLMRQAGRYLPEYKATRAKAGSFMGLATNVEYATEVTLQPLERFPLDAAILFSDILTVPDAMGLGLSFAEGEGPRFAKAVRDEADVAALAVPDLDKLRYVFDAVTSIRRALNGRVPLIGFSGSPWTLACYMVEGKGSDDYRLVKTLMYSRPDLMHRILAVNADAVAAYLNAQIDAGAQAVMVFDSWGGVLADGCFQDFSLEYTRRVLAQLKRTGVDGQDVPRIVFTKGGGIWLDDMKDIDCEVLGLDWTAHLGKARAIVGGQVGGPGKALQGNIDPNVLFAPSAQIVTQVRAVLDSFGTPHTDKTTTGPTHIFNLGHGISQFTPPEHVAALVEAVHGYSRSLRQR.

Residues 29–33 (RQAGR), aspartate 79, tyrosine 155, serine 210, and histidine 342 contribute to the substrate site.

It belongs to the uroporphyrinogen decarboxylase family. As to quaternary structure, homodimer.

It is found in the cytoplasm. It catalyses the reaction uroporphyrinogen III + 4 H(+) = coproporphyrinogen III + 4 CO2. The protein operates within porphyrin-containing compound metabolism; protoporphyrin-IX biosynthesis; coproporphyrinogen-III from 5-aminolevulinate: step 4/4. Functionally, catalyzes the decarboxylation of four acetate groups of uroporphyrinogen-III to yield coproporphyrinogen-III. This chain is Uroporphyrinogen decarboxylase, found in Acidovorax ebreus (strain TPSY) (Diaphorobacter sp. (strain TPSY)).